Reading from the N-terminus, the 586-residue chain is Arginine--tRNA ligase (586 aa).

Residues 128–138 (ANPTGPLHVGH) carry the 'HIGH' region motif.

The protein belongs to the class-I aminoacyl-tRNA synthetase family. Monomer.

The protein resides in the cytoplasm. The catalysed reaction is tRNA(Arg) + L-arginine + ATP = L-arginyl-tRNA(Arg) + AMP + diphosphate. This is Arginine--tRNA ligase from Legionella pneumophila (strain Corby).